The chain runs to 400 residues: Phosphoglycerate kinase (400 aa).

Residues 24-26, arginine 40, 63-66, arginine 121, and arginine 154 each bind substrate; these read DFN and HFGR. Residues lysine 205, glycine 296, glutamate 327, and 356-359 contribute to the ATP site; that span reads GGDS.

In terms of assembly, monomer.

It is found in the cytoplasm. The enzyme catalyses (2R)-3-phosphoglycerate + ATP = (2R)-3-phospho-glyceroyl phosphate + ADP. It participates in carbohydrate degradation; glycolysis; pyruvate from D-glyceraldehyde 3-phosphate: step 2/5. This Nostoc sp. (strain PCC 7120 / SAG 25.82 / UTEX 2576) protein is Phosphoglycerate kinase.